The sequence spans 892 residues: MSSLASQGNNASTPAYRYGFQTSEVGDRPTVSMPSQPESSAMLEDDGMVKRKPFAAIGEAIPKVIDTTGESVREAFEEFLLSFSDDRVAGGDALPSASQEKYYVQQIHGLAMYEIHTVYVDYKHLTSYNDVLALAIVEQYYRFSPFLLRALQKLIEKFEPEYYRSSLSRENASLSPNFKASDKTFALAFYNLPFRSTIRDLRTDRIGRLTTITGTVTRTSEVRPELAQGTFICEECHTVVSNVEQAFRYTEPTQCPNELCANKRSWRLNISQSSFQDWQKVRIQENSNEIPTGSMPRTLDVILRGDIVERAKAGDKCAFTGILIAVPDVSQLGIPGVKPEAYRDSRNFGGRDADGVTGLKSLGVRDLTYKLSFLACMVQPDDANDKSGADVRGDGSQGIEEQDEFLQSLSQEEIDDLRAMVHSDHIYSRLTNSLAPSVYGHEIIKKGILLQLMGGVHKLTPEGINLRGDLNICIVGDPSTSKSQFLKYVCNFLPRAIYTSGKASSAAGLTAAVVKDEETGDFTIEAGALMLADNGICAIDEFDKMDLSDQVAIHEAMEQQTISIAKAGIQATLNARTSILAAANPIGGRYNRKTTLRNNINMSAPIMSRFDLFFVVLDECNESVDRHLAKHIVDIHRLRDDAMQPEFSTEQLQRYIRYARTFKPKLNTESCAEIVKKYKQLRMDDAQGAGKNSYRITVRQLESMIRLSEAIARANCVDDITPAFVNEAYSLLRQSIIHVERDDIEVEEDDAEAQELENDNTNTTNGNDNVSSEEALQKPKVKITYDKYVSIMNGILQVLRQRSTEGVDGVPAGDLVQSYLELREDQFHTEEDIIYEVGLVRKVLTRLVHESIIMEIQNLTDSAVRLPFEERVFSIHPNCDIDALLSNGDVPN.

2 positions are modified to phosphoserine: serine 96 and serine 98. An MCM domain is found at 426–633 (IYSRLTNSLA…VDRHLAKHIV (208 aa)). Position 476–483 (476–483 (GDPSTSKS)) interacts with ATP. The Arginine finger motif lies at 608-611 (SRFD). Residues 748-758 (EDDAEAQELEN) show a composition bias toward acidic residues. A disordered region spans residues 748–774 (EDDAEAQELENDNTNTTNGNDNVSSEE). The segment covering 759 to 769 (DNTNTTNGNDN) has biased composition (low complexity).

It belongs to the MCM family. Component of the mcm2-7 complex. The complex forms a toroidal hexameric ring with the proposed subunit order mcm2-mcm6-mcm4-mcm7-mcm3-mcm5. The heterodimers of mcm4/mcm6 and mcm3/mcm5 interact with mcm2 and mcm7. Interacts with sld3.

It is found in the nucleus. The catalysed reaction is ATP + H2O = ADP + phosphate + H(+). In terms of biological role, acts as a component of the mcm2-7 complex (mcm complex) which is the putative replicative helicase essential for 'once per cell cycle' DNA replication initiation and elongation in eukaryotic cells. The active ATPase sites in the mcm2-7 ring are formed through the interaction surfaces of two neighboring subunits such that a critical structure of a conserved arginine finger motif is provided in trans relative to the ATP-binding site of the Walker A box of the adjacent subunit. The six ATPase active sites, however, are likely to contribute differentially to the complex helicase activity. This Schizosaccharomyces pombe (strain 972 / ATCC 24843) (Fission yeast) protein is DNA replication licensing factor mcm6 (mcm6).